A 428-amino-acid chain; its full sequence is Enolase (428 aa).

Q163 serves as a coordination point for (2R)-2-phosphoglycerate. E205 serves as the catalytic Proton donor. Mg(2+) is bound by residues D242, E286, and D313. (2R)-2-phosphoglycerate is bound by residues K338, R367, S368, and K389. K338 acts as the Proton acceptor in catalysis.

Belongs to the enolase family. Requires Mg(2+) as cofactor.

Its subcellular location is the cytoplasm. The protein localises to the secreted. The protein resides in the cell surface. The enzyme catalyses (2R)-2-phosphoglycerate = phosphoenolpyruvate + H2O. It functions in the pathway carbohydrate degradation; glycolysis; pyruvate from D-glyceraldehyde 3-phosphate: step 4/5. Its function is as follows. Catalyzes the reversible conversion of 2-phosphoglycerate (2-PG) into phosphoenolpyruvate (PEP). It is essential for the degradation of carbohydrates via glycolysis. The protein is Enolase of Bordetella petrii (strain ATCC BAA-461 / DSM 12804 / CCUG 43448).